Reading from the N-terminus, the 103-residue chain is KRSLRDLGIPVNQIIPEGGSLKDLKDLPRAWFNIVPYREVGLMTATFLEKEYGMPYVSVTPMGILDTAEFISQVEKLVNAWASVLSEERVNYMLYIQNQTRFV.

This sequence belongs to the ChlB/BchB/BchZ family. As to quaternary structure, protochlorophyllide reductase is composed of three subunits; ChlL, ChlN and ChlB. Forms a heterotetramer of two ChlB and two ChlN subunits. [4Fe-4S] cluster serves as cofactor.

The protein resides in the plastid. It localises to the chloroplast. It carries out the reaction chlorophyllide a + oxidized 2[4Fe-4S]-[ferredoxin] + 2 ADP + 2 phosphate = protochlorophyllide a + reduced 2[4Fe-4S]-[ferredoxin] + 2 ATP + 2 H2O. It participates in porphyrin-containing compound metabolism; chlorophyll biosynthesis (light-independent). Functionally, component of the dark-operative protochlorophyllide reductase (DPOR) that uses Mg-ATP and reduced ferredoxin to reduce ring D of protochlorophyllide (Pchlide) to form chlorophyllide a (Chlide). This reaction is light-independent. The NB-protein (ChlN-ChlB) is the catalytic component of the complex. The protein is Light-independent protochlorophyllide reductase subunit B (chlB) of Sphaeropteris cooperi (Australian tree fern).